A 323-amino-acid polypeptide reads, in one-letter code: 2-methylene-furan-3-one reductase (323 aa).

NADP(+)-binding positions include Lys-59, 174–175, 197–200, Tyr-216, Ile-254, 265–267, and 312–313; these read GV, STKK, FVL, and RA. A substrate-binding site is contributed by Lys-59.

Belongs to the zinc-containing alcohol dehydrogenase family. Quinone oxidoreductase subfamily. Monomer. In terms of processing, the N-terminus is blocked. In terms of tissue distribution, expressed in parenchyma tissues of red fruits. Not found in vascular tissues. Also detected in the achenes.

The catalysed reaction is 4-hydroxy-2,5-dimethyl-furan-3(2H)-one + NADP(+) = 4-hydroxy-5-methyl-2-methylenefuran-3(2H)-one + NADPH + H(+). Its function is as follows. Enone oxidoreductase involved in the biosynthesis of 4-hydroxy-2,5-dimethyl-3(2H)-furanone (HDMF or furaneol), the key flavor compound in strawberries. Can use both NADH and NADPH as the electron donor. The protein is 2-methylene-furan-3-one reductase (EO) of Fragaria ananassa (Strawberry).